Consider the following 220-residue polypeptide: Small ribosomal subunit protein mS42 (220 aa).

Belongs to the mitochondrion-specific ribosomal protein mS42 family. As to quaternary structure, component of the mitochondrial small ribosomal subunit (mt-SSU). Mature yeast 74S mitochondrial ribosomes consist of a small (37S) and a large (54S) subunit. The 37S small subunit contains a 15S ribosomal RNA (15S mt-rRNA) and at least 32 different proteins. The 54S large subunit contains a 21S rRNA (21S mt-rRNA) and at least 45 different proteins. mS43 forms a dimer with mS42, building a large protuberance adjacent to the mRNA channel exit in the mt-SSU body.

Its subcellular location is the mitochondrion. Its function is as follows. Component of the mitochondrial ribosome (mitoribosome), a dedicated translation machinery responsible for the synthesis of mitochondrial genome-encoded proteins, including at least some of the essential transmembrane subunits of the mitochondrial respiratory chain. The mitoribosomes are attached to the mitochondrial inner membrane and translation products are cotranslationally integrated into the membrane. The chain is Small ribosomal subunit protein mS42 from Schizosaccharomyces pombe (strain 972 / ATCC 24843) (Fission yeast).